Consider the following 2211-residue polypeptide: Nonribosomal peptide synthetase 13 (2211 aa).

Residues 76 to 475 form an adenylation 1 region; the sequence is TYAELDSLSD…IEHHLQLTLP (400 aa). Residues 594–671 enclose the Carrier 1 domain; it reads PPSTPKEATI…EQSKRAGLIQ (78 aa). At S631 the chain carries O-(pantetheine 4'-phosphoryl)serine. The tract at residues 710–975 is condensation 1; that stretch reads EDIYPCTALQ…IATVPTRIRV (266 aa). The adenylation 2 stretch occupies residues 1169 to 1563; it reads TYRELWAHSS…LGAVEASVMR (395 aa). Residues 1677-1756 enclose the Carrier 2 domain; sequence PMSDDNERRL…RSRHLITEQA (80 aa). Residue S1714 is modified to O-(pantetheine 4'-phosphoryl)serine. Residues 1814 to 2069 are condensation 2; the sequence is HFQFDLSGAV…CTNYIPYRLS (256 aa).

This sequence belongs to the NRP synthetase family.

The catalysed reaction is L-proline + L-tryptophan + 2 ATP = brevianamide F + 2 AMP + 2 diphosphate + 2 H(+). It participates in mycotoxin biosynthesis. In terms of biological role, nonribosomal peptide synthetase; part of the gene cluster that mediates the biosynthesis of fumitremorgins, indole alkaloids that carry not only intriguing chemical structures, but also interesting biological and pharmacological activities. The biosynthesis of fumitremorgin-type alkaloids begins by condensation of the two amino acids L-tryptophan and L-proline to brevianamide F, catalyzed by the non-ribosomal peptide synthetase ftmA. Brevianamide F is then prenylated by the prenyltransferase ftmPT1/ftmB in the presence of dimethylallyl diphosphate, resulting in the formation of tryprostatin B. The three cytochrome P450 monooxygenases, ftmP450-1/ftmC, ftmP450-2/ftmE and ftmP450-3/FtmG, are responsible for the conversion of tryprostatin B to 6-hydroxytryprostatin B, tryprostatin A to fumitremorgin C and fumitremorgin C to 12,13-dihydroxyfumitremorgin C, respectively. The putative methyltransferase ftmMT/ftmD is expected for the conversion of 6-hydroxytryprostatin B to tryprostatin A. FtmPT2/FtmH catalyzes the prenylation of 12,13-dihydroxyfumitre-morgin C in the presence of dimethylallyl diphosphate, resulting in the formation of fumitremorgin B. Fumitremorgin B is further converted to verruculogen by ftmOx1/ftmF via the insertion of an endoperoxide bond between the two prenyl moieties. In some fungal species, verruculogen is further converted to fumitremorgin A, but the enzymes involved in this step have not been identified yet. In Aspergillus fumigatus (Neosartorya fumigata), this protein is Nonribosomal peptide synthetase 13.